Here is a 386-residue protein sequence, read N- to C-terminus: S-adenosylmethionine:tRNA ribosyltransferase-isomerase (386 aa).

This sequence belongs to the QueA family. In terms of assembly, monomer.

It is found in the cytoplasm. It catalyses the reaction 7-aminomethyl-7-carbaguanosine(34) in tRNA + S-adenosyl-L-methionine = epoxyqueuosine(34) in tRNA + adenine + L-methionine + 2 H(+). It participates in tRNA modification; tRNA-queuosine biosynthesis. Its function is as follows. Transfers and isomerizes the ribose moiety from AdoMet to the 7-aminomethyl group of 7-deazaguanine (preQ1-tRNA) to give epoxyqueuosine (oQ-tRNA). This is S-adenosylmethionine:tRNA ribosyltransferase-isomerase from Rickettsia canadensis (strain McKiel).